A 735-amino-acid polypeptide reads, in one-letter code: Type-3 glutamine synthetase (735 aa).

Positions 89-183 (THYCHWFLPL…IPTAFCSWTG (95 aa)) constitute a GS beta-grasp domain. The GS catalytic domain maps to 188–621 (QKTPLLRSME…SLYDLVSTLV (434 aa)).

Belongs to the glutamine synthetase family. Type 3 subfamily. In terms of assembly, homohexamer.

It carries out the reaction L-glutamate + NH4(+) + ATP = L-glutamine + ADP + phosphate + H(+). The protein is Type-3 glutamine synthetase (glnA3) of Dictyostelium discoideum (Social amoeba).